A 185-amino-acid polypeptide reads, in one-letter code: Ribosome-recycling factor (185 aa).

The interval 127-158 (AVRNTRQDANNKVKKLEKDKEISEDESKKAQE) is disordered.

Belongs to the RRF family.

The protein resides in the cytoplasm. Its function is as follows. Responsible for the release of ribosomes from messenger RNA at the termination of protein biosynthesis. May increase the efficiency of translation by recycling ribosomes from one round of translation to another. The polypeptide is Ribosome-recycling factor (Helicobacter pylori (strain G27)).